A 429-amino-acid chain; its full sequence is D-amino acid dehydrogenase 1 (429 aa).

An FAD-binding site is contributed by 3-17 (VLVLGSGVIGVTSAY).

This sequence belongs to the DadA oxidoreductase family. It depends on FAD as a cofactor.

It carries out the reaction a D-alpha-amino acid + A + H2O = a 2-oxocarboxylate + AH2 + NH4(+). Its function is as follows. Oxidative deamination of D-amino acids. In Ralstonia nicotianae (strain ATCC BAA-1114 / GMI1000) (Ralstonia solanacearum), this protein is D-amino acid dehydrogenase 1 (dadA1).